The chain runs to 178 residues: N-alpha-acetyltransferase 20 (178 aa).

The 156-residue stretch at 2-157 folds into the N-acetyltransferase domain; it reads TTLRAFTCDD…DAYDMRKALS (156 aa).

The protein belongs to the acetyltransferase family. ARD1 subfamily. Component of the N-terminal acetyltransferase B (NatB) complex which is composed of NAA20 and NAA25.

The protein localises to the cytoplasm. Its subcellular location is the nucleus. The catalysed reaction is N-terminal L-methionyl-L-asparaginyl-[protein] + acetyl-CoA = N-terminal N(alpha)-acetyl-L-methionyl-L-asparaginyl-[protein] + CoA + H(+). The enzyme catalyses N-terminal L-methionyl-L-glutaminyl-[protein] + acetyl-CoA = N-terminal N(alpha)-acetyl-L-methionyl-L-glutaminyl-[protein] + CoA + H(+). It carries out the reaction N-terminal L-methionyl-L-aspartyl-[protein] + acetyl-CoA = N-terminal N(alpha)-acetyl-L-methionyl-L-aspartyl-[protein] + CoA + H(+). It catalyses the reaction N-terminal L-methionyl-L-glutamyl-[protein] + acetyl-CoA = N-terminal N(alpha)-acetyl-L-methionyl-L-glutamyl-[protein] + CoA + H(+). Its function is as follows. Catalytic subunit of the NatB complex which catalyzes acetylation of the N-terminal methionine residues of peptides beginning with Met-Asp, Met-Glu, Met-Asn and Met-Gln. Proteins with cell cycle functions are overrepresented in the pool of NatB substrates. Required for maintaining the structure and function of actomyosin fibers and for proper cellular migration. This chain is N-alpha-acetyltransferase 20 (NAA20), found in Homo sapiens (Human).